The sequence spans 420 residues: Transmembrane protease serine 11B-like protein (420 aa).

Residues 1-19 (MTVSKLRPVIASRKSFPPW) are Cytoplasmic-facing. A helical; Signal-anchor for type II membrane protein membrane pass occupies residues 20–40 (MIILGVLGVLAILGLIIGLLV). At 41–420 (HFLAVENKIY…RDWIASKTGI (380 aa)) the chain is on the extracellular side. In terms of domain architecture, SEA spans 48 to 165 (KIYYYQGSFK…GSLKLTEITK (118 aa)). N-linked (GlcNAc...) asparagine glycosylation is found at asparagine 111 and asparagine 146. The 231-residue stretch at 189 to 419 (ITGGSTAQKG…YRDWIASKTG (231 aa)) folds into the Peptidase S1 domain. Cysteine 214 and cysteine 230 are oxidised to a cystine. Residue histidine 229 is the Charge relay system of the active site. Residue asparagine 239 is glycosylated (N-linked (GlcNAc...) asparagine). The active-site Charge relay system is the aspartate 274. 2 cysteine pairs are disulfide-bonded: cysteine 339-cysteine 355 and cysteine 366-cysteine 395. The active-site Charge relay system is serine 370.

Belongs to the peptidase S1 family.

Its subcellular location is the membrane. It localises to the cell membrane. Inhibited by aprotinin, leupeptin, benzamidine, SERPINA1, SPINT1 and SPINT2. Functionally, serine protease. This is Transmembrane protease serine 11B-like protein (Tmprss11bnl) from Rattus norvegicus (Rat).